The following is a 142-amino-acid chain: Putative pre-16S rRNA nuclease (142 aa).

This sequence belongs to the YqgF nuclease family.

The protein localises to the cytoplasm. In terms of biological role, could be a nuclease involved in processing of the 5'-end of pre-16S rRNA. This chain is Putative pre-16S rRNA nuclease, found in Desulfitobacterium hafniense (strain DSM 10664 / DCB-2).